The chain runs to 118 residues: Large ribosomal subunit protein bL20 (118 aa).

This sequence belongs to the bacterial ribosomal protein bL20 family.

Functionally, binds directly to 23S ribosomal RNA and is necessary for the in vitro assembly process of the 50S ribosomal subunit. It is not involved in the protein synthesizing functions of that subunit. The polypeptide is Large ribosomal subunit protein bL20 (Hydrogenovibrio crunogenus (strain DSM 25203 / XCL-2) (Thiomicrospira crunogena)).